A 328-amino-acid polypeptide reads, in one-letter code: 2,3-diketo-L-gulonate-binding periplasmic protein YiaO (328 aa).

An N-terminal signal peptide occupies residues 1–24; the sequence is MKLRSVTYALFIAGLAAFSTSSLA.

As to quaternary structure, the complex comprises the extracytoplasmic solute receptor protein YiaO, and the two transmembrane proteins YiaM and YiaN.

It is found in the periplasm. Part of the tripartite ATP-independent periplasmic (TRAP) transport system YiaMNO involved in the uptake of 2,3-diketo-L-gulonate. This protein specifically binds 2,3-diketo-L-gulonate. Is not able to bind either L-ascorbate or dehydroascorbate. The polypeptide is 2,3-diketo-L-gulonate-binding periplasmic protein YiaO (yiaO) (Escherichia coli (strain K12)).